A 245-amino-acid chain; its full sequence is 3-deoxy-manno-octulosonate cytidylyltransferase (245 aa).

Belongs to the KdsB family.

The protein localises to the cytoplasm. It carries out the reaction 3-deoxy-alpha-D-manno-oct-2-ulosonate + CTP = CMP-3-deoxy-beta-D-manno-octulosonate + diphosphate. It functions in the pathway nucleotide-sugar biosynthesis; CMP-3-deoxy-D-manno-octulosonate biosynthesis; CMP-3-deoxy-D-manno-octulosonate from 3-deoxy-D-manno-octulosonate and CTP: step 1/1. It participates in bacterial outer membrane biogenesis; lipopolysaccharide biosynthesis. In terms of biological role, activates KDO (a required 8-carbon sugar) for incorporation into bacterial lipopolysaccharide in Gram-negative bacteria. This Fusobacterium nucleatum subsp. nucleatum (strain ATCC 25586 / DSM 15643 / BCRC 10681 / CIP 101130 / JCM 8532 / KCTC 2640 / LMG 13131 / VPI 4355) protein is 3-deoxy-manno-octulosonate cytidylyltransferase.